The sequence spans 567 residues: MAQPPRLSRSGASSLWDPASPAPTSGPRPRLWEGQDVLARWTDGLLYLGTIKKVDSAREVCLVQFEDDSQFLVLWKDISPAALPGEELLCCVCRSETVVPGNRLVSCEKCRHAYHQDCHVPRAPAPGEGEGTSWVCRQCVFAIATKRGGALKKGPYARAMLGMKLSLPYGLKGLDWDAGHLSNRQQSYCYCGGPGEWNLKMLQCRSCLQWFHEACTQCLSKPLLYGDRFYEFECCVCRGGPEKVRRLQLRWVDVAHLVLYHLSVCCKKKYFDFDREILPFTSENWDSLLLGELSDTPKGERSSRLLSALNSHKDRFISGREIKKRKCLFGLHARMPPPVEPPTGDGALTSFPSGQGPGGGVSRPLGKRRRPEPEPLRRRQKGKVEELGPPSAVRNQPEPQEQRERAHLQRALQASVSPPSPSPNQSYQGSSGYNFRPTDARCLPSSPIRMFASFHPSASTAGTSGDSGPPDRSPLELHIGFPTDIPKSAPHSMTASSSSVSSPSPGLPRRSAPPSPLCRSLSPGTGGGVRGGVGYLSRGDPVRVLARRVRPDGSVQYLVEWGGGGIF.

The interval 1-31 is disordered; the sequence is MAQPPRLSRSGASSLWDPASPAPTSGPRPRL. Positions 29-86 constitute a Tudor domain; sequence PRLWEGQDVLARWTDGLLYLGTIKKVDSAREVCLVQFEDDSQFLVLWKDISPAALPGE. PHD-type zinc fingers lie at residues 87–142 and 186–240; these read ELLC…CVFA and QSYC…CRGG. Disordered regions lie at residues 333–441 and 455–537; these read ARMP…TDAR and HPSA…GYLS. Gly360 carries the phosphoserine modification. The segment covering 371–386 has biased composition (basic and acidic residues); sequence PEPEPLRRRQKGKVEE. Residue Ser420 is modified to Phosphoserine. Composition is skewed to low complexity over residues 423–433, 456–470, and 488–510; these read PNQSYQGSSGY, PSAS…SGPP, and SAPH…LPRR. Over residues 524–534 the composition is skewed to gly residues; the sequence is GTGGGVRGGVG.

This sequence belongs to the Polycomblike family. As to quaternary structure, interacts with CHMP1. Associated component of the PRC2 complex. Interacts with p53/TP53. In terms of tissue distribution, highest levels in heart, skeletal muscle, and pancreas, lower levels in brain, placenta, lung, liver and kidney.

Its subcellular location is the nucleus. It localises to the cytoplasm. It is found in the cytoskeleton. The protein localises to the microtubule organizing center. The protein resides in the centrosome. Polycomb group (PcG) that specifically binds histone H3 trimethylated at 'Lys-36' (H3K36me3) and recruits the PRC2 complex. Involved in DNA damage response and is recruited at double-strand breaks (DSBs). Acts by binding to H3K36me3, a mark for transcriptional activation, and recruiting the PRC2 complex: it is however unclear whether recruitment of the PRC2 complex to H3K36me3 leads to enhance or inhibit H3K27me3 methylation mediated by the PRC2 complex. According to some reports, PRC2 recruitment by PHF1 promotes H3K27me3 and subsequent gene silencing by inducing spreading of PRC2 and H3K27me3 into H3K36me3 loci. According to another report, PHF1 recruits the PRC2 complex at double-strand breaks (DSBs) and inhibits the activity of PRC2. Regulates p53/TP53 stability and prolonges its turnover: may act by specifically binding to a methylated from of p53/TP53. The sequence is that of PHD finger protein 1 (PHF1) from Homo sapiens (Human).